Reading from the N-terminus, the 943-residue chain is Isoleucine--tRNA ligase (943 aa).

The 'HIGH' region motif lies at 58-68 (PYANGSIHIGH). Position 567 (glutamate 567) interacts with L-isoleucyl-5'-AMP. The 'KMSKS' region motif lies at 608-612 (KMSKS). Lysine 611 is a binding site for ATP. The Zn(2+) site is built by cysteine 906, cysteine 909, cysteine 926, and cysteine 929.

It belongs to the class-I aminoacyl-tRNA synthetase family. IleS type 1 subfamily. As to quaternary structure, monomer. Zn(2+) serves as cofactor.

The protein resides in the cytoplasm. The enzyme catalyses tRNA(Ile) + L-isoleucine + ATP = L-isoleucyl-tRNA(Ile) + AMP + diphosphate. Its function is as follows. Catalyzes the attachment of isoleucine to tRNA(Ile). As IleRS can inadvertently accommodate and process structurally similar amino acids such as valine, to avoid such errors it has two additional distinct tRNA(Ile)-dependent editing activities. One activity is designated as 'pretransfer' editing and involves the hydrolysis of activated Val-AMP. The other activity is designated 'posttransfer' editing and involves deacylation of mischarged Val-tRNA(Ile). In Pseudomonas aeruginosa (strain UCBPP-PA14), this protein is Isoleucine--tRNA ligase.